The primary structure comprises 688 residues: DNA ligase (688 aa).

NAD(+) is bound by residues 42-46 (DAEYD), 91-92 (SL), and E128. The N6-AMP-lysine intermediate role is filled by K130. NAD(+) is bound by residues R151, E188, K305, and K329. 4 residues coordinate Zn(2+): C423, C426, C441, and C447. The region spanning 608–688 (APQGVLAGKT…GMRKLLEGQL (81 aa)) is the BRCT domain.

The protein belongs to the NAD-dependent DNA ligase family. LigA subfamily. Mg(2+) is required as a cofactor. Mn(2+) serves as cofactor.

It carries out the reaction NAD(+) + (deoxyribonucleotide)n-3'-hydroxyl + 5'-phospho-(deoxyribonucleotide)m = (deoxyribonucleotide)n+m + AMP + beta-nicotinamide D-nucleotide.. In terms of biological role, DNA ligase that catalyzes the formation of phosphodiester linkages between 5'-phosphoryl and 3'-hydroxyl groups in double-stranded DNA using NAD as a coenzyme and as the energy source for the reaction. It is essential for DNA replication and repair of damaged DNA. In Paraburkholderia phytofirmans (strain DSM 17436 / LMG 22146 / PsJN) (Burkholderia phytofirmans), this protein is DNA ligase.